Consider the following 299-residue polypeptide: HTH-type transcriptional regulator ArgP (299 aa).

Positions 4–60 constitute an HTH lysR-type domain; it reads PDYRALQALDAVIRERGFERAAQKLCITQSAVSQRIKQLENLFGQPLLVRTVPPQPT. Positions 21–40 form a DNA-binding region, H-T-H motif; it reads FERAAQKLCITQSAVSQRIK.

It belongs to the LysR transcriptional regulatory family. In terms of assembly, homodimer.

Its function is as follows. Controls the transcription of genes involved in arginine and lysine metabolism. This chain is HTH-type transcriptional regulator ArgP, found in Proteus mirabilis (strain HI4320).